Reading from the N-terminus, the 396-residue chain is Pyruvate dehydrogenase E1 component subunit alpha type I, mitochondrial (396 aa).

Residues methionine 1–leucine 25 constitute a mitochondrion transit peptide. Pyruvate contacts are provided by histidine 88, tyrosine 114, arginine 115, glycine 153, glycine 161, valine 163, aspartate 192, glycine 193, alanine 194, asparagine 221, and tyrosine 223. Thiamine diphosphate contacts are provided by tyrosine 114 and arginine 115. 6 residues coordinate thiamine diphosphate: glycine 161, valine 163, aspartate 192, glycine 193, alanine 194, and asparagine 221. Aspartate 192 provides a ligand contact to Mg(2+). Mg(2+) contacts are provided by asparagine 221 and tyrosine 223. Histidine 288 contributes to the thiamine diphosphate binding site. Phosphoserine is present on residues serine 289 and serine 296.

As to quaternary structure, heterotetramer of two PDHA1 and two PDHB subunits. The heterotetramer interacts with DLAT, and is part of the multimeric pyruvate dehydrogenase complex that contains multiple copies of pyruvate dehydrogenase (E1), dihydrolipoamide acetyltransferase (DLAT, E2) and lipoamide dehydrogenase (DLD, E3). Thiamine diphosphate serves as cofactor. Requires Mg(2+) as cofactor.

The protein localises to the mitochondrion matrix. The catalysed reaction is N(6)-[(R)-lipoyl]-L-lysyl-[protein] + pyruvate + H(+) = N(6)-[(R)-S(8)-acetyldihydrolipoyl]-L-lysyl-[protein] + CO2. With respect to regulation, pyruvate dehydrogenase activity is inhibited by phosphorylation of PDHA1; it is reactivated by dephosphorylation. The pyruvate dehydrogenase complex catalyzes the overall conversion of pyruvate to acetyl-CoA and CO(2), and thereby links the glycolytic pathway to the tricarboxylic cycle. In Ascaris suum (Pig roundworm), this protein is Pyruvate dehydrogenase E1 component subunit alpha type I, mitochondrial.